The chain runs to 145 residues: Peptide methionine sulfoxide reductase MsrB (145 aa).

One can recognise a MsrB domain in the interval 4-127; that stretch reads SDELKQRIGD…NSAALKFIPY (124 aa). Cys-116 serves as the catalytic Nucleophile.

This sequence belongs to the MsrB Met sulfoxide reductase family.

The catalysed reaction is L-methionyl-[protein] + [thioredoxin]-disulfide + H2O = L-methionyl-(R)-S-oxide-[protein] + [thioredoxin]-dithiol. The chain is Peptide methionine sulfoxide reductase MsrB from Streptococcus pyogenes serotype M18 (strain MGAS8232).